Consider the following 368-residue polypeptide: DNA replication and repair protein RecF (368 aa).

30 to 37 (GDNGAGKT) contributes to the ATP binding site.

Belongs to the RecF family.

The protein localises to the cytoplasm. The RecF protein is involved in DNA metabolism; it is required for DNA replication and normal SOS inducibility. RecF binds preferentially to single-stranded, linear DNA. It also seems to bind ATP. The sequence is that of DNA replication and repair protein RecF from Xanthomonas axonopodis pv. citri (strain 306).